The chain runs to 491 residues: Probable CtpA-like serine protease (491 aa).

Residues 1–22 are disordered; that stretch reads MNDHQKNHATSQDDNTKSTPSK. Residues 8 to 22 show a composition bias toward polar residues; sequence HATSQDDNTKSTPSK. The helical transmembrane segment at 31-51 threads the bilayer; that stretch reads LWHFILVILGIILLTSIITVV. The PDZ domain occupies 119–201; sequence TKQFNEGVSG…TYVTLTIKRG (83 aa). Catalysis depends on charge relay system residues Ser-324, Asp-335, and Lys-349.

This sequence belongs to the peptidase S41A family.

Its subcellular location is the cell membrane. This Staphylococcus epidermidis (strain ATCC 35984 / DSM 28319 / BCRC 17069 / CCUG 31568 / BM 3577 / RP62A) protein is Probable CtpA-like serine protease.